The chain runs to 312 residues: HPr kinase/phosphorylase (312 aa).

Active-site residues include H139 and K160. Residue 154 to 161 participates in ATP binding; that stretch reads GDSGIGKS. S161 lines the Mg(2+) pocket. D178 (proton acceptor; for phosphorylation activity. Proton donor; for dephosphorylation activity) is an active-site residue. The interval 202–211 is important for the catalytic mechanism of both phosphorylation and dephosphorylation; that stretch reads IEIRGVGIID. E203 is a Mg(2+) binding site. Residue R244 is part of the active site. Residues 265–270 are important for the catalytic mechanism of dephosphorylation; the sequence is PVKTGR.

This sequence belongs to the HPrK/P family. In terms of assembly, homohexamer. The cofactor is Mg(2+).

The catalysed reaction is [HPr protein]-L-serine + ATP = [HPr protein]-O-phospho-L-serine + ADP + H(+). The enzyme catalyses [HPr protein]-O-phospho-L-serine + phosphate + H(+) = [HPr protein]-L-serine + diphosphate. Catalyzes the ATP- as well as the pyrophosphate-dependent phosphorylation of a specific serine residue in HPr, a phosphocarrier protein of the phosphoenolpyruvate-dependent sugar phosphotransferase system (PTS). HprK/P also catalyzes the pyrophosphate-producing, inorganic phosphate-dependent dephosphorylation (phosphorolysis) of seryl-phosphorylated HPr (P-Ser-HPr). The two antagonistic activities of HprK/P are regulated by several intracellular metabolites, which change their concentration in response to the absence or presence of rapidly metabolisable carbon sources (glucose, fructose, etc.) in the growth medium. Therefore, by controlling the phosphorylation state of HPr, HPrK/P is a sensor enzyme that plays a major role in the regulation of carbon metabolism and sugar transport: it mediates carbon catabolite repression (CCR), and regulates PTS-catalyzed carbohydrate uptake and inducer exclusion. In Streptococcus pneumoniae serotype 4 (strain ATCC BAA-334 / TIGR4), this protein is HPr kinase/phosphorylase.